We begin with the raw amino-acid sequence, 479 residues long: Ribulose bisphosphate carboxylase large chain (479 aa).

Residues 1-2 (MS) constitute a propeptide that is removed on maturation. Substrate-binding residues include Asn123 and Thr173. Lys175 acts as the Proton acceptor in catalysis. Lys177 provides a ligand contact to substrate. Mg(2+) is bound by residues Lys201, Asp203, and Glu204. N6-carboxylysine is present on Lys201. Phosphoserine is present on Ser208. The Proton acceptor role is filled by His294. Substrate is bound by residues Arg295 and His327. Position 330 is a phosphothreonine (Thr330). A substrate-binding site is contributed by Ser379.

Belongs to the RuBisCO large chain family. Type I subfamily. As to quaternary structure, heterohexadecamer of 8 large chains and 8 small chains; disulfide-linked. The disulfide link is formed within the large subunit homodimers. Requires Mg(2+) as cofactor. The disulfide bond which can form in the large chain dimeric partners within the hexadecamer appears to be associated with oxidative stress and protein turnover.

Its subcellular location is the plastid. It localises to the chloroplast. The enzyme catalyses 2 (2R)-3-phosphoglycerate + 2 H(+) = D-ribulose 1,5-bisphosphate + CO2 + H2O. It catalyses the reaction D-ribulose 1,5-bisphosphate + O2 = 2-phosphoglycolate + (2R)-3-phosphoglycerate + 2 H(+). Functionally, ruBisCO catalyzes two reactions: the carboxylation of D-ribulose 1,5-bisphosphate, the primary event in carbon dioxide fixation, as well as the oxidative fragmentation of the pentose substrate in the photorespiration process. Both reactions occur simultaneously and in competition at the same active site. In Nasturtium officinale (Watercress), this protein is Ribulose bisphosphate carboxylase large chain.